Reading from the N-terminus, the 189-residue chain is Glucose-6-phosphate isomerase (189 aa).

Residues histidine 88, histidine 90, glutamate 97, and histidine 136 each coordinate Fe cation.

The protein belongs to the archaeal-type GPI family. Homodimer.

The protein localises to the cytoplasm. It carries out the reaction alpha-D-glucose 6-phosphate = beta-D-fructose 6-phosphate. The protein operates within carbohydrate degradation; glycolysis; D-glyceraldehyde 3-phosphate and glycerone phosphate from D-glucose: step 2/4. This Thermococcus gammatolerans (strain DSM 15229 / JCM 11827 / EJ3) protein is Glucose-6-phosphate isomerase.